A 351-amino-acid polypeptide reads, in one-letter code: Biotin synthase (351 aa).

One can recognise a Radical SAM core domain in the interval 44–262 (NRVQVSTLLS…LAVARILMPQ (219 aa)). [4Fe-4S] cluster is bound by residues C59, C63, and C66. Positions 103, 134, 194, and 266 each coordinate [2Fe-2S] cluster.

The protein belongs to the radical SAM superfamily. Biotin synthase family. In terms of assembly, homodimer. [4Fe-4S] cluster is required as a cofactor. It depends on [2Fe-2S] cluster as a cofactor.

The enzyme catalyses (4R,5S)-dethiobiotin + (sulfur carrier)-SH + 2 reduced [2Fe-2S]-[ferredoxin] + 2 S-adenosyl-L-methionine = (sulfur carrier)-H + biotin + 2 5'-deoxyadenosine + 2 L-methionine + 2 oxidized [2Fe-2S]-[ferredoxin]. It functions in the pathway cofactor biosynthesis; biotin biosynthesis; biotin from 7,8-diaminononanoate: step 2/2. In terms of biological role, catalyzes the conversion of dethiobiotin (DTB) to biotin by the insertion of a sulfur atom into dethiobiotin via a radical-based mechanism. The sequence is that of Biotin synthase from Pseudomonas fluorescens (strain Pf0-1).